The primary structure comprises 339 residues: Ferrochelatase (339 aa).

Fe cation contacts are provided by H202 and E283.

Belongs to the ferrochelatase family.

The protein localises to the cytoplasm. It carries out the reaction heme b + 2 H(+) = protoporphyrin IX + Fe(2+). The protein operates within porphyrin-containing compound metabolism; protoheme biosynthesis; protoheme from protoporphyrin-IX: step 1/1. Catalyzes the ferrous insertion into protoporphyrin IX. This chain is Ferrochelatase, found in Psychrobacter cryohalolentis (strain ATCC BAA-1226 / DSM 17306 / VKM B-2378 / K5).